Here is a 276-residue protein sequence, read N- to C-terminus: Zinc transporter ZTP29 (276 aa).

Over 1–6 (MDSQML) the chain is Cytoplasmic. A helical membrane pass occupies residues 7 to 27 (VALGLSLVGGLSTSLGALFVV). Residues 28 to 35 (LSETPNMK) are Lumenal-facing. A helical transmembrane segment spans residues 36–56 (MLGLLQGFASGLMLSISFLDL). At 57–63 (AHNAINS) the chain is on the cytoplasmic side. Residues 64–84 (IGFFKANLWFFGGVIFFACIT) form a helical membrane-spanning segment. At 85–123 (KFIPEPTLGPSTDGKRRKKNGDEGGKDMMKKHRKQVLYS) the chain is on the lumenal side. The chain crosses the membrane as a helical span at residues 124 to 144 (GLITAIGISLHNFPEGMAVFL). The Cytoplasmic portion of the chain corresponds to 145–156 (GSIKGMRVGVNL). Residues 157–177 (ALAIALHNIPEGVAVALPIYF) form a helical membrane-spanning segment. Over 178-187 (ATESKWQAFK) the chain is Lumenal. The helical transmembrane segment at 188-208 (LATLSGLAEPLGVIIVAYLFP) threads the bilayer. Topologically, residues 209–219 (RSLSPEILEGL) are cytoplasmic. A helical transmembrane segment spans residues 220–240 (LGAVGGIMAFLTLHEMLPLAF). Over 241–250 (DYAGQKQAVK) the chain is Lumenal. Residues 251-271 (AVFFGMACMSASLYFLELSLP) form a helical membrane-spanning segment. At 272–276 (ETMSL) the chain is on the cytoplasmic side.

It belongs to the ZIP transporter (TC 2.A.5) family. ZupT subfamily. In terms of tissue distribution, expressed in hypocotyls, cotyledons, leaves and anthers.

Its subcellular location is the endoplasmic reticulum membrane. Its function is as follows. Zinc transporter involved response to salt stress. May act through the regulation of zinc levels required to induce the unfolded protein response (UPR) pathway. The chain is Zinc transporter ZTP29 (ZTP29) from Arabidopsis thaliana (Mouse-ear cress).